A 167-amino-acid polypeptide reads, in one-letter code: Ribosome maturation factor RimM (167 aa).

The 74-residue stretch at 92 to 165 (EDTYYIADII…RITIDPIEGM (74 aa)) folds into the PRC barrel domain.

The protein belongs to the RimM family. As to quaternary structure, binds ribosomal protein uS19.

It localises to the cytoplasm. Functionally, an accessory protein needed during the final step in the assembly of 30S ribosomal subunit, possibly for assembly of the head region. Essential for efficient processing of 16S rRNA. May be needed both before and after RbfA during the maturation of 16S rRNA. It has affinity for free ribosomal 30S subunits but not for 70S ribosomes. This Alkaliphilus oremlandii (strain OhILAs) (Clostridium oremlandii (strain OhILAs)) protein is Ribosome maturation factor RimM.